The primary structure comprises 143 residues: Cofilin/actin-depolymerizing factor homolog 2 (143 aa).

An ADF-H domain is found at 4–141 (GVKVSDECVY…FEDELRTIIL (138 aa)).

It belongs to the actin-binding proteins ADF family. In terms of assembly, interacts with monomeric actin, does not bind to actin polymers.

Its subcellular location is the cytoplasm. It localises to the cytoskeleton. Not involved in actin polymerisation, instead functions to stimulate nucleotide exchange on monomeric actin and influence turnover of the small amount of cytosolic actin microfilaments. Essential for erythrocytic schizogony. The protein is Cofilin/actin-depolymerizing factor homolog 2 of Plasmodium falciparum (isolate 3D7).